The following is a 535-amino-acid chain: GMP synthase [glutamine-hydrolyzing] (535 aa).

The 191-residue stretch at Pro20 to Asp210 folds into the Glutamine amidotransferase type-1 domain. The active-site Nucleophile is the Cys97. Residues His184 and Glu186 contribute to the active site. In terms of domain architecture, GMPS ATP-PPase spans Trp211 to Arg409. ATP is bound at residue Ser238 to Ala244.

In terms of assembly, homodimer.

It catalyses the reaction XMP + L-glutamine + ATP + H2O = GMP + L-glutamate + AMP + diphosphate + 2 H(+). Its pathway is purine metabolism; GMP biosynthesis; GMP from XMP (L-Gln route): step 1/1. Catalyzes the synthesis of GMP from XMP. The polypeptide is GMP synthase [glutamine-hydrolyzing] (Bifidobacterium longum (strain NCC 2705)).